The following is a 470-amino-acid chain: Uronate isomerase (470 aa).

Belongs to the metallo-dependent hydrolases superfamily. Uronate isomerase family.

The enzyme catalyses D-glucuronate = D-fructuronate. It carries out the reaction aldehydo-D-galacturonate = keto-D-tagaturonate. The protein operates within carbohydrate metabolism; pentose and glucuronate interconversion. This is Uronate isomerase from Escherichia coli O157:H7 (strain EC4115 / EHEC).